We begin with the raw amino-acid sequence, 251 residues long: Uroporphyrinogen-III synthase (251 aa).

Residues 231-251 are disordered; the sequence is PAPNPESLASSIVAFDEENSS.

The protein belongs to the uroporphyrinogen-III synthase family.

The enzyme catalyses hydroxymethylbilane = uroporphyrinogen III + H2O. The protein operates within porphyrin-containing compound metabolism; protoporphyrin-IX biosynthesis; coproporphyrinogen-III from 5-aminolevulinate: step 3/4. Catalyzes cyclization of the linear tetrapyrrole, hydroxymethylbilane, to the macrocyclic uroporphyrinogen III. The sequence is that of Uroporphyrinogen-III synthase (ups1) from Schizosaccharomyces pombe (strain 972 / ATCC 24843) (Fission yeast).